Here is a 462-residue protein sequence, read N- to C-terminus: uncharacterized protein (462 aa).

Positions 405–462 (QPIGNNKSSPMKREFTAMEEDKTETGDIFKLLSQQKPAKGAKSKSKKYKKTEEDLSAV) are disordered. Over residues 415–431 (MKREFTAMEEDKTETGD) the composition is skewed to basic and acidic residues. Residues 443-453 (KGAKSKSKKYK) are compositionally biased toward basic residues.

This is an uncharacterized protein from Magallana gigas (Pacific oyster).